A 188-amino-acid polypeptide reads, in one-letter code: Protein SSX4 (188 aa).

The region spanning 20-83 is the KRAB-related domain; sequence KLRKAFDDIA…KRAADFHGND (64 aa). Over residues 116-127 the composition is skewed to basic and acidic residues; sequence PAEEENGLKEVP. The tract at residues 116 to 167 is disordered; the sequence is PAEEENGLKEVPEASGPQNDGKQLCPPGNPSTLEKINKTSGPKRGKHAWTHR. A compositionally biased stretch (polar residues) spans 145-155; that stretch reads PSTLEKINKTS. Over residues 156 to 167 the composition is skewed to basic residues; the sequence is GPKRGKHAWTHR.

This sequence belongs to the SSX family.

In terms of biological role, could act as a modulator of transcription. This chain is Protein SSX4 (SSX4), found in Homo sapiens (Human).